The sequence spans 319 residues: Phospho-N-acetylmuramoyl-pentapeptide-transferase (319 aa).

Helical transmembrane passes span 5–25, 51–71, 79–99, 116–136, 149–169, 172–192, 197–217, 224–244, 252–272, and 299–319; these read LIPF…FIGF, TMGG…VLIW, AWIL…DDGI, LGQI…HFAF, SFLF…AVNL, GLDG…AWIA, NWVI…FFIF, IFMG…VSIF, LLIG…VISF, and VDIV…IIWG.

It belongs to the glycosyltransferase 4 family. MraY subfamily. Requires Mg(2+) as cofactor.

The protein resides in the cell membrane. The catalysed reaction is UDP-N-acetyl-alpha-D-muramoyl-L-alanyl-gamma-D-glutamyl-L-lysyl-D-alanyl-D-alanine + di-trans,octa-cis-undecaprenyl phosphate = Mur2Ac(oyl-L-Ala-gamma-D-Glu-L-Lys-D-Ala-D-Ala)-di-trans,octa-cis-undecaprenyl diphosphate + UMP. Its pathway is cell wall biogenesis; peptidoglycan biosynthesis. Functionally, catalyzes the initial step of the lipid cycle reactions in the biosynthesis of the cell wall peptidoglycan: transfers peptidoglycan precursor phospho-MurNAc-pentapeptide from UDP-MurNAc-pentapeptide onto the lipid carrier undecaprenyl phosphate, yielding undecaprenyl-pyrophosphoryl-MurNAc-pentapeptide, known as lipid I. The polypeptide is Phospho-N-acetylmuramoyl-pentapeptide-transferase (Lactobacillus johnsonii (strain CNCM I-12250 / La1 / NCC 533)).